Reading from the N-terminus, the 566-residue chain is Tissue-type plasminogen activator (566 aa).

The first 21 residues, 1 to 21 (MMSAMKTEFLCVLLLCGAVFT), serve as a signal peptide directing secretion. Residues 22–33 (SPSQETYRRLRR) constitute a propeptide that is removed on maturation. Positions 34-36 (GAR) are cleaved as a propeptide — removed by plasmin. A Fibronectin type-I domain is found at 40-82 (VTCRDGKTQMTYRQHDSWLRPLLRGNQVEHCWCDGGRAQCHSV). 17 disulfides stabilise this stretch: cysteine 42–cysteine 72, cysteine 70–cysteine 79, cysteine 87–cysteine 98, cysteine 92–cysteine 109, cysteine 111–cysteine 120, cysteine 128–cysteine 209, cysteine 149–cysteine 191, cysteine 180–cysteine 204, cysteine 219–cysteine 300, cysteine 240–cysteine 282, cysteine 271–cysteine 295, cysteine 303–cysteine 434, cysteine 346–cysteine 362, cysteine 354–cysteine 423, cysteine 448–cysteine 523, cysteine 480–cysteine 496, and cysteine 513–cysteine 541. The segment at 43-53 (RDGKTQMTYRQ) is important for binding to annexin A2. The EGF-like domain occupies 83–121 (PVRSCSEPWCFNGGTCRQALYSSDFVCQCPEGFMGKLCE). Kringle domains follow at residues 128–209 (CYKD…TPAC) and 219–300 (CYTG…VPQC). Asparagine 153 is a glycosylation site (N-linked (GlcNAc...) asparagine). A Peptidase S1 domain is found at 315 to 565 (IKGGLFADIT…YLDWIRDNTR (251 aa)). Active-site charge relay system residues include histidine 361 and aspartate 410. Asparagine 487 carries an N-linked (GlcNAc...) asparagine glycan. Residue serine 517 is the Charge relay system of the active site.

Belongs to the peptidase S1 family. As to quaternary structure, heterodimer of chain A and chain B held by a disulfide bond. Binds to fibrin with high affinity. This interaction leads to an increase in the catalytic efficiency of the enzyme due to an increase in affinity for plasminogen. Similarly, binding to heparin increases the activation of plasminogen. Binds to annexin A2, cytokeratin-8, fibronectin and laminin. Binds to mannose receptor and the low-density lipoprotein receptor-related protein (LRP1); these proteins are involved in TPA clearance. Binds LRP1B; binding is followed by internalization and degradation. Forms heterodimer with SERPINA5. Interacts with SERPINE1. In complex with SERPINE1, interacts with SORL1. In terms of processing, the single chain, almost fully active enzyme, can be further processed into a two-chain fully active form by a cleavage after Arg-314 catalyzed by plasmin, tissue kallikrein or factor Xa.

The protein resides in the secreted. It is found in the extracellular space. The enzyme catalyses Specific cleavage of Arg-|-Val bond in plasminogen to form plasmin.. With respect to regulation, inhibited by SERPINA5. Inhibited by SERPINE1. Its function is as follows. Converts the abundant, but inactive, zymogen plasminogen to plasmin by hydrolyzing a single Arg-Val bond in plasminogen. By controlling plasmin-mediated proteolysis, it plays an important role in tissue remodeling and degradation, in cell migration and many other physiopathological events. During oocyte activation, plays a role in cortical granule reaction in the zona reaction, which contributes to the block to polyspermy. In Bos taurus (Bovine), this protein is Tissue-type plasminogen activator (PLAT).